Here is a 154-residue protein sequence, read N- to C-terminus: uncharacterized protein (154 aa).

3 helical membrane-spanning segments follow: residues 26 to 48 (VSGWLTIIGILVAIAGIIIGVVT), 97 to 119 (IAMFGIALAVYGGIVGLLLLIVF), and 132 to 150 (GLYTFLAIAIFCLMVYCAW).

Its subcellular location is the cell membrane. This is an uncharacterized protein from Archaeoglobus fulgidus (strain ATCC 49558 / DSM 4304 / JCM 9628 / NBRC 100126 / VC-16).